A 102-amino-acid polypeptide reads, in one-letter code: NADH-quinone oxidoreductase subunit K (102 aa).

3 helical membrane passes run 5 to 25 (LTQY…GIIL), 30 to 50 (IIII…NLVA), and 62 to 82 (IFAL…LAIL).

This sequence belongs to the complex I subunit 4L family. In terms of assembly, NDH-1 is composed of 14 different subunits. Subunits NuoA, H, J, K, L, M, N constitute the membrane sector of the complex.

Its subcellular location is the cell inner membrane. The enzyme catalyses a quinone + NADH + 5 H(+)(in) = a quinol + NAD(+) + 4 H(+)(out). Functionally, NDH-1 shuttles electrons from NADH, via FMN and iron-sulfur (Fe-S) centers, to quinones in the respiratory chain. The immediate electron acceptor for the enzyme in this species is believed to be ubiquinone. Couples the redox reaction to proton translocation (for every two electrons transferred, four hydrogen ions are translocated across the cytoplasmic membrane), and thus conserves the redox energy in a proton gradient. The sequence is that of NADH-quinone oxidoreductase subunit K from Beijerinckia indica subsp. indica (strain ATCC 9039 / DSM 1715 / NCIMB 8712).